We begin with the raw amino-acid sequence, 496 residues long: Cytosol aminopeptidase (496 aa).

Residues Lys258 and Asp263 each coordinate Mn(2+). Lys270 is an active-site residue. Positions 281, 340, and 342 each coordinate Mn(2+). Arg344 is a catalytic residue.

This sequence belongs to the peptidase M17 family. Mn(2+) serves as cofactor.

The protein localises to the cytoplasm. The enzyme catalyses Release of an N-terminal amino acid, Xaa-|-Yaa-, in which Xaa is preferably Leu, but may be other amino acids including Pro although not Arg or Lys, and Yaa may be Pro. Amino acid amides and methyl esters are also readily hydrolyzed, but rates on arylamides are exceedingly low.. It catalyses the reaction Release of an N-terminal amino acid, preferentially leucine, but not glutamic or aspartic acids.. Functionally, presumably involved in the processing and regular turnover of intracellular proteins. Catalyzes the removal of unsubstituted N-terminal amino acids from various peptides. The polypeptide is Cytosol aminopeptidase (pepA) (Helicobacter pylori (strain J99 / ATCC 700824) (Campylobacter pylori J99)).